Consider the following 59-residue polypeptide: Large ribosomal subunit protein uL30 (59 aa).

It belongs to the universal ribosomal protein uL30 family. Part of the 50S ribosomal subunit.

The protein is Large ribosomal subunit protein uL30 of Alkaliphilus metalliredigens (strain QYMF).